We begin with the raw amino-acid sequence, 103 residues long: Ubiquitin-related modifier 1 (103 aa).

Residue Gly103 is modified to 1-thioglycine. Gly103 is covalently cross-linked (Glycyl lysine isopeptide (Gly-Lys) (interchain with K-? in acceptor proteins)).

This sequence belongs to the URM1 family. C-terminal thiocarboxylation occurs in 2 steps, it is first acyl-adenylated (-COAMP) via the hesA/moeB/thiF part of UBA4, then thiocarboxylated (-COSH) via the rhodanese domain of UBA4.

Its subcellular location is the cytoplasm. Its pathway is tRNA modification; 5-methoxycarbonylmethyl-2-thiouridine-tRNA biosynthesis. Functionally, acts as a sulfur carrier required for 2-thiolation of mcm(5)S(2)U at tRNA wobble positions of cytosolic tRNA(Lys), tRNA(Glu) and tRNA(Gln). Serves as sulfur donor in tRNA 2-thiolation reaction by being thiocarboxylated (-COSH) at its C-terminus by the MOCS3 homolog UBA4. The sulfur is then transferred to tRNA to form 2-thiolation of mcm(5)S(2)U. Prior mcm(5) tRNA modification by the elongator complex is required for 2-thiolation. Also acts as a ubiquitin-like protein (UBL) that is covalently conjugated via an isopeptide bond to lysine residues of target proteins such as AHP1. The thiocarboxylated form serves as substrate for conjugation and oxidative stress specifically induces the formation of UBL-protein conjugates. This Vanderwaltozyma polyspora (strain ATCC 22028 / DSM 70294 / BCRC 21397 / CBS 2163 / NBRC 10782 / NRRL Y-8283 / UCD 57-17) (Kluyveromyces polysporus) protein is Ubiquitin-related modifier 1.